We begin with the raw amino-acid sequence, 554 residues long: Urocanate hydratase (554 aa).

NAD(+) contacts are provided by residues Gly51–Gly52, Gln129, Gly175–Gly177, Glu195, Arg200, Asn241–Ala242, Gln262–His266, Tyr272–Leu273, and Tyr321. The active site involves Cys409. Gly491 is a binding site for NAD(+).

The protein belongs to the urocanase family. NAD(+) is required as a cofactor.

It is found in the cytoplasm. It carries out the reaction 4-imidazolone-5-propanoate = trans-urocanate + H2O. It functions in the pathway amino-acid degradation; L-histidine degradation into L-glutamate; N-formimidoyl-L-glutamate from L-histidine: step 2/3. Functionally, catalyzes the conversion of urocanate to 4-imidazolone-5-propionate. The protein is Urocanate hydratase of Caulobacter sp. (strain K31).